Consider the following 860-residue polypeptide: Leucine--tRNA ligase (860 aa).

Residues 42–52 (PYPSGRLHMGH) carry the 'HIGH' region motif. The 'KMSKS' region motif lies at 619–623 (KMSKS). Lysine 622 provides a ligand contact to ATP.

The protein belongs to the class-I aminoacyl-tRNA synthetase family.

Its subcellular location is the cytoplasm. The catalysed reaction is tRNA(Leu) + L-leucine + ATP = L-leucyl-tRNA(Leu) + AMP + diphosphate. The chain is Leucine--tRNA ligase from Shigella boydii serotype 18 (strain CDC 3083-94 / BS512).